The chain runs to 343 residues: Uroporphyrinogen decarboxylase (343 aa).

Substrate-binding positions include 26 to 30 (RQAGR), Asp-75, Tyr-150, Ser-205, and His-319.

This sequence belongs to the uroporphyrinogen decarboxylase family. Homodimer.

The protein localises to the cytoplasm. It carries out the reaction uroporphyrinogen III + 4 H(+) = coproporphyrinogen III + 4 CO2. The protein operates within porphyrin-containing compound metabolism; protoporphyrin-IX biosynthesis; coproporphyrinogen-III from 5-aminolevulinate: step 4/4. Catalyzes the decarboxylation of four acetate groups of uroporphyrinogen-III to yield coproporphyrinogen-III. The polypeptide is Uroporphyrinogen decarboxylase (Syntrophotalea carbinolica (strain DSM 2380 / NBRC 103641 / GraBd1) (Pelobacter carbinolicus)).